Here is a 265-residue protein sequence, read N- to C-terminus: Uronate dehydrogenase (265 aa).

NAD(+) is bound by residues 12–13 (QL), 32–34 (DLS), 49–50 (DL), and 69–73 (LGGIS). Substrate contacts are provided by residues Ser-73 and 109 to 111 (SNH). Tyr-134 serves as the catalytic Proton acceptor. Position 138 (Lys-138) interacts with NAD(+). Ser-163 contributes to the substrate binding site. Cys-164 is an NAD(+) binding site. Arg-172 contacts substrate.

Belongs to the NAD(P)-dependent epimerase/dehydratase family. As to quaternary structure, homohexamer.

The catalysed reaction is beta-D-galacturonate + NAD(+) = D-galactaro-1,5-lactone + NADH + H(+). The enzyme catalyses beta-D-glucuronate + NAD(+) = D-glucaro-1,5-lactone + NADH + H(+). Its pathway is carbohydrate acid metabolism; D-galacturonate degradation via prokaryotic oxidative pathway. Catalyzes the oxidation of D-galacturonate and D-glucuronate to galactarate and D-glucarate, respectively. In fact, in water solution the substrate D-galacturonate is predominantly in pyranosic form whose beta anomer is converted by the enzyme to D-galactaro-1,5-lactone; in solution, this reaction product rearranges to the more stable D-galactaro-1,4-lactone. Makes part of the oxidative degradation pathway of D-galacturonate, which allows A.tumefaciens to utilize D-galacturonate as a sole carbon source. Cannot use NADP(+) instead of NAD(+) as cosubstrate. Is not active on D-galactose, D-glucose, D-galactonate and D-gluconate. In Agrobacterium fabrum (strain C58 / ATCC 33970) (Agrobacterium tumefaciens (strain C58)), this protein is Uronate dehydrogenase (udh).